Here is a 232-residue protein sequence, read N- to C-terminus: Ribonuclease HII (232 aa).

An RNase H type-2 domain is found at 26–218 (RILCGVDEAG…VRRALEGMSA (193 aa)). A divalent metal cation-binding residues include D32, E33, and D127.

It belongs to the RNase HII family. Requires Mn(2+) as cofactor. Mg(2+) is required as a cofactor.

The protein localises to the cytoplasm. It carries out the reaction Endonucleolytic cleavage to 5'-phosphomonoester.. Endonuclease that specifically degrades the RNA of RNA-DNA hybrids. In Ralstonia pickettii (strain 12J), this protein is Ribonuclease HII.